A 460-amino-acid chain; its full sequence is Ribosomal protein uS12 methylthiotransferase RimO (460 aa).

The 115-residue stretch at Asn-16–Ala-130 folds into the MTTase N-terminal domain. 6 residues coordinate [4Fe-4S] cluster: Cys-25, Cys-61, Cys-93, Cys-164, Cys-168, and Cys-171. The Radical SAM core domain occupies Ser-150–Lys-382. The 71-residue stretch at Lys-385–Lys-455 folds into the TRAM domain.

This sequence belongs to the methylthiotransferase family. RimO subfamily. [4Fe-4S] cluster serves as cofactor.

It localises to the cytoplasm. It catalyses the reaction L-aspartate(89)-[ribosomal protein uS12]-hydrogen + (sulfur carrier)-SH + AH2 + 2 S-adenosyl-L-methionine = 3-methylsulfanyl-L-aspartate(89)-[ribosomal protein uS12]-hydrogen + (sulfur carrier)-H + 5'-deoxyadenosine + L-methionine + A + S-adenosyl-L-homocysteine + 2 H(+). In terms of biological role, catalyzes the methylthiolation of an aspartic acid residue of ribosomal protein uS12. The sequence is that of Ribosomal protein uS12 methylthiotransferase RimO from Chlamydia caviae (strain ATCC VR-813 / DSM 19441 / 03DC25 / GPIC) (Chlamydophila caviae).